Consider the following 99-residue polypeptide: Large ribosomal subunit protein uL23 (99 aa).

The protein belongs to the universal ribosomal protein uL23 family. Part of the 50S ribosomal subunit. Contacts protein L29, and trigger factor when it is bound to the ribosome.

One of the early assembly proteins it binds 23S rRNA. One of the proteins that surrounds the polypeptide exit tunnel on the outside of the ribosome. Forms the main docking site for trigger factor binding to the ribosome. This chain is Large ribosomal subunit protein uL23, found in Oenococcus oeni (strain ATCC BAA-331 / PSU-1).